We begin with the raw amino-acid sequence, 475 residues long: Probable sensor histidine kinase TcrY (475 aa).

At M1 to L153 the chain is on the extracellular side. Residues I154 to I174 form a helical membrane-spanning segment. Residues I175–R475 lie on the Cytoplasmic side of the membrane. Residues K176 to S238 enclose the HAMP domain. The region spanning D253–G466 is the Histidine kinase domain. H256 is modified (phosphohistidine; by autocatalysis).

As to quaternary structure, homodimer. A divalent metal cation is required as a cofactor. Autophosphorylated.

It localises to the cell membrane. The catalysed reaction is ATP + protein L-histidine = ADP + protein N-phospho-L-histidine.. Functionally, member of the two-component regulatory system TcrY/TcrX. Activates TcrX by phosphorylation. This Mycobacterium tuberculosis (strain ATCC 25618 / H37Rv) protein is Probable sensor histidine kinase TcrY (tcrY).